A 1096-amino-acid polypeptide reads, in one-letter code: Serine/threonine-protein kinase mig-15 (1096 aa).

In terms of domain architecture, Protein kinase spans 21–288 (FELIEVVGNG…TGALLRHPFI (268 aa)). ATP contacts are provided by residues 27–35 (VGNGTYGQV) and K50. D151 functions as the Proton acceptor in the catalytic mechanism. Over residues 293 to 315 (HEQTIRHSIKEHIDRNRRVKKDD) the composition is skewed to basic and acidic residues. 4 disordered regions span residues 293-351 (HEQT…MIPM), 380-492 (LPQQ…QQSR), 517-545 (KMGG…EASI), and 574-664 (NGEG…DLLP). Over residues 316–328 (ADYEYSGSEDDEP) the composition is skewed to acidic residues. Positions 380–393 (LPQQPAPAPFQYQQ) are enriched in low complexity. Composition is skewed to basic and acidic residues over residues 397-408 (VEPRRESSEVKL) and 453-472 (NYEK…ERQA). Residues 532–541 (SPPPPAPPPR) show a composition bias toward pro residues. Acidic residues predominate over residues 629–642 (LDDDDSDSDNEEGN). The 293-residue stretch at 778-1070 (SGEILCAALW…KFLCERNDKV (293 aa)) folds into the CNH domain.

It belongs to the protein kinase superfamily. STE Ser/Thr protein kinase family. STE20 subfamily.

The enzyme catalyses L-seryl-[protein] + ATP = O-phospho-L-seryl-[protein] + ADP + H(+). It carries out the reaction L-threonyl-[protein] + ATP = O-phospho-L-threonyl-[protein] + ADP + H(+). In terms of biological role, involved in cell migration and signal transduction. Important in several developmental processes including epidermal development, Q neuroblast migrations and muscle arm targeting. Required with ina-1/pat-3 to stabilize the commissural axons growth cone along a precise direction and are required for the cell to respond appropriately when signaling in the growth cone must change. During gonad morphogenesis, involved in distal tip cell (DTC) migration from the dorsal side of the hermaphrodite body to the midbody to allow for formation of gonad arms. In Caenorhabditis elegans, this protein is Serine/threonine-protein kinase mig-15 (mig-15).